Here is a 101-residue protein sequence, read N- to C-terminus: Small ribosomal subunit protein uS14 (101 aa).

The protein belongs to the universal ribosomal protein uS14 family. Part of the 30S ribosomal subunit. Contacts proteins S3 and S10.

Its function is as follows. Binds 16S rRNA, required for the assembly of 30S particles and may also be responsible for determining the conformation of the 16S rRNA at the A site. This chain is Small ribosomal subunit protein uS14, found in Paenarthrobacter aurescens (strain TC1).